Here is a 275-residue protein sequence, read N- to C-terminus: Small ribosomal subunit protein uS2 (275 aa).

The disordered stretch occupies residues 226–275 (AAAPNSASVREEEFSAEAGDEGKGRRAPAKKATEKKADAPAAAPEAPAAE). Residues 264–275 (APAAAPEAPAAE) are compositionally biased toward low complexity.

It belongs to the universal ribosomal protein uS2 family.

The polypeptide is Small ribosomal subunit protein uS2 (Xanthomonas campestris pv. campestris (strain 8004)).